The primary structure comprises 231 residues: Aldehyde decarbonylase (231 aa).

E32, E60, H63, E115, and H147 together coordinate Fe cation.

The protein belongs to the aldehyde decarbonylase family. Requires Binds 2 metal cations per subunit. The catalytic dinuclear metal-binding site could be either a di-iron or a manganese-iron cofactor. as cofactor.

It carries out the reaction a long-chain fatty aldehyde + 2 NADPH + O2 + H(+) = a long-chain alkane + formate + 2 NADP(+) + H2O. In terms of biological role, catalyzes the decarbonylation of fatty aldehydes to alkanes. Requires the presence of ferredoxin, ferredoxin reductase and NADPH for in vitro decarbonylase activity. Involved in the biosynthesis of alkanes, mainly heptadecane and pentadecane. The polypeptide is Aldehyde decarbonylase (Synechococcus elongatus (strain ATCC 33912 / PCC 7942 / FACHB-805) (Anacystis nidulans R2)).